A 302-amino-acid chain; its full sequence is Glutaminase (302 aa).

7 residues coordinate substrate: serine 61, asparagine 111, glutamate 155, asparagine 162, tyrosine 186, tyrosine 238, and valine 256.

Belongs to the glutaminase family. In terms of assembly, homotetramer.

It carries out the reaction L-glutamine + H2O = L-glutamate + NH4(+). This chain is Glutaminase, found in Pseudomonas fluorescens (strain SBW25).